Here is a 487-residue protein sequence, read N- to C-terminus: Acetyl-coenzyme A carboxylase carboxyl transferase subunit beta, chloroplastic (487 aa).

Residues 223-487 (LWIQCDNCYG…FFPLKKNEIK (265 aa)) enclose the CoA carboxyltransferase N-terminal domain. Zn(2+)-binding residues include C227, C230, C243, and C246. A C4-type zinc finger spans residues 227 to 246 (CDNCYGLMYKKVKMNVCEQC).

It belongs to the AccD/PCCB family. Acetyl-CoA carboxylase is a heterohexamer composed of biotin carboxyl carrier protein, biotin carboxylase and 2 subunits each of ACCase subunit alpha and ACCase plastid-coded subunit beta (accD). It depends on Zn(2+) as a cofactor.

It localises to the plastid. Its subcellular location is the chloroplast stroma. It catalyses the reaction N(6)-carboxybiotinyl-L-lysyl-[protein] + acetyl-CoA = N(6)-biotinyl-L-lysyl-[protein] + malonyl-CoA. Its pathway is lipid metabolism; malonyl-CoA biosynthesis; malonyl-CoA from acetyl-CoA: step 1/1. Component of the acetyl coenzyme A carboxylase (ACC) complex. Biotin carboxylase (BC) catalyzes the carboxylation of biotin on its carrier protein (BCCP) and then the CO(2) group is transferred by the transcarboxylase to acetyl-CoA to form malonyl-CoA. This is Acetyl-coenzyme A carboxylase carboxyl transferase subunit beta, chloroplastic from Lepidium virginicum (Virginia pepperweed).